We begin with the raw amino-acid sequence, 169 residues long: MMNANRIPIRILGLDPGLRRTGWGVVSVEGSRMSHVAHGVIVPDEKGEFASRLLCLFEGICAVIDAHRPDEAAVEEVFLNTNAQSTLKLGHARAAALIAPARAGLLVAEYSTRLVKKAVVGTGAADKAQIGFMIARLLPTAGKTTADCADALAVAITHANLRIANRRVA.

Residues D15, E75, and D147 contribute to the active site. Residues D15, E75, and D147 each contribute to the Mg(2+) site.

This sequence belongs to the RuvC family. Homodimer which binds Holliday junction (HJ) DNA. The HJ becomes 2-fold symmetrical on binding to RuvC with unstacked arms; it has a different conformation from HJ DNA in complex with RuvA. In the full resolvosome a probable DNA-RuvA(4)-RuvB(12)-RuvC(2) complex forms which resolves the HJ. Mg(2+) is required as a cofactor.

Its subcellular location is the cytoplasm. It catalyses the reaction Endonucleolytic cleavage at a junction such as a reciprocal single-stranded crossover between two homologous DNA duplexes (Holliday junction).. Functionally, the RuvA-RuvB-RuvC complex processes Holliday junction (HJ) DNA during genetic recombination and DNA repair. Endonuclease that resolves HJ intermediates. Cleaves cruciform DNA by making single-stranded nicks across the HJ at symmetrical positions within the homologous arms, yielding a 5'-phosphate and a 3'-hydroxyl group; requires a central core of homology in the junction. The consensus cleavage sequence is 5'-(A/T)TT(C/G)-3'. Cleavage occurs on the 3'-side of the TT dinucleotide at the point of strand exchange. HJ branch migration catalyzed by RuvA-RuvB allows RuvC to scan DNA until it finds its consensus sequence, where it cleaves and resolves the cruciform DNA. This Caulobacter sp. (strain K31) protein is Crossover junction endodeoxyribonuclease RuvC.